The chain runs to 797 residues: Short transient receptor potential channel 4-associated protein (797 aa).

Ala-2 is modified (N-acetylalanine). An interaction with TNFRSF1A region spans residues Ala-2–Met-400.

As to quaternary structure, component of the DCX(TRPC4AP) E3 ubiquitin ligase complex, at least composed of CUL4A, DDB1, TRPC4AP/TRUSS and RBX1. Interacts with MYC. Constitutively associated with TNFRSF1A. Directly interacts with TRADD, TRAF2, CHUK, IKBKB and IKBKG. Interacts with TRPC1, TRPC4 and TRPC5. Phosphorylated by GSK3B; phosphorylation is required for ubiquitination. Post-translationally, ubiquitinated by a SCF (SKP1-CUL1-F-box protein) E3 ubiquitin-protein ligase containing SKP2, leading to its degradation. Phosphorylation by GSK3B is required for ubiquitination. In terms of tissue distribution, widely expressed, with high levels in heart, liver and testis.

It is found in the cytoplasm. Its subcellular location is the perinuclear region. It participates in protein modification; protein ubiquitination. Its function is as follows. Substrate-recognition component of a DCX (DDB1-CUL4-X-box) E3 ubiquitin-protein ligase complex required for cell cycle control. The DCX(TRPC4AP) complex specifically mediates the polyubiquitination and subsequent degradation of MYC as part of the DesCEND (destruction via C-end degrons) pathway. The DesCEND (destruction via C-end degrons) pathway recognizes a C-degron located at the extreme C terminus of target proteins, leading to their ubiquitination and degradation. The DCX(TRPC4AP) complex specifically recognizes proteins with an arginine at the minus 3 position (R-3 motif) at the C-terminus, such as MYC, leading to their ubiquitination and degradation. Also participates in the activation of NFKB1 in response to ligation of TNFRSF1A, possibly by linking TNFRSF1A to the IKK signalosome. Involved in JNK activation via its interaction with TRAF2. Also involved in elevation of endoplasmic reticulum Ca(2+) storage reduction in response to CHRM1. The sequence is that of Short transient receptor potential channel 4-associated protein from Mus musculus (Mouse).